We begin with the raw amino-acid sequence, 253 residues long: Claudin domain-containing protein 1 (253 aa).

A helical transmembrane segment spans residues phenylalanine 5 to alanine 25. N-linked (GlcNAc...) asparagine glycans are attached at residues asparagine 42 and asparagine 72. A run of 3 helical transmembrane segments spans residues phenylalanine 141–alanine 161, isoleucine 175–isoleucine 195, and phenylalanine 216–alanine 236.

Belongs to the PMP-22/EMP/MP20 family.

It is found in the cell junction. The protein localises to the tight junction. The protein resides in the cell membrane. Its function is as follows. Plays a role in negatively regulating the permeability of cells to small molecules. The polypeptide is Claudin domain-containing protein 1 (CLDND1) (Macaca fascicularis (Crab-eating macaque)).